The chain runs to 106 residues: Large ribosomal subunit protein uL24 (106 aa).

It belongs to the universal ribosomal protein uL24 family. In terms of assembly, part of the 50S ribosomal subunit.

Its function is as follows. One of two assembly initiator proteins, it binds directly to the 5'-end of the 23S rRNA, where it nucleates assembly of the 50S subunit. One of the proteins that surrounds the polypeptide exit tunnel on the outside of the subunit. The polypeptide is Large ribosomal subunit protein uL24 (Acidiphilium cryptum (strain JF-5)).